We begin with the raw amino-acid sequence, 121 residues long: Large ribosomal subunit protein bL17 (121 aa).

This sequence belongs to the bacterial ribosomal protein bL17 family. Part of the 50S ribosomal subunit. Contacts protein L32.

The protein is Large ribosomal subunit protein bL17 of Mycoplasmopsis agalactiae (strain NCTC 10123 / CIP 59.7 / PG2) (Mycoplasma agalactiae).